A 695-amino-acid polypeptide reads, in one-letter code: Elongation factor G (695 aa).

The tr-type G domain maps to D12–L286. Residues A21 to T28, D85 to H89, and N139 to D142 each bind GTP.

It belongs to the TRAFAC class translation factor GTPase superfamily. Classic translation factor GTPase family. EF-G/EF-2 subfamily.

Its subcellular location is the cytoplasm. Catalyzes the GTP-dependent ribosomal translocation step during translation elongation. During this step, the ribosome changes from the pre-translocational (PRE) to the post-translocational (POST) state as the newly formed A-site-bound peptidyl-tRNA and P-site-bound deacylated tRNA move to the P and E sites, respectively. Catalyzes the coordinated movement of the two tRNA molecules, the mRNA and conformational changes in the ribosome. This chain is Elongation factor G, found in Thermotoga neapolitana (strain ATCC 49049 / DSM 4359 / NBRC 107923 / NS-E).